Here is a 781-residue protein sequence, read N- to C-terminus: DEAD-box ATP-dependent RNA helicase 50 (781 aa).

Disordered stretches follow at residues 72 to 103, 117 to 148, 166 to 240, 254 to 292, and 313 to 342; these read EFAPPPSSDLLSSIPSESARRNGSRSRGLTAS, GKVTQKKQHMSHNEEEDEDDASDENYSADEGF, IPRS…KGDR, GRAIDEVSNPRKFNDNERAESRSSYSRDSSANSRGREDR, and YNPRRFTDNERGLRGGSHSKGSDTNSRGWG. Low complexity predominate over residues 79–88; sequence SDLLSSIPSE. Acidic residues predominate over residues 130-143; sequence EEEDEDDASDENYS. Positions 171-197 are enriched in basic and acidic residues; that stretch reads KSAERNEVKRASKVRESRESRRDLDRL. The span at 198–208 shows a compositional bias: acidic residues; it reads EGDDEDVDEVS. Over residues 216–226 the composition is skewed to polar residues; the sequence is NQRAGSRSSYS. A compositionally biased stretch (basic and acidic residues) spans 254–274; sequence GRAIDEVSNPRKFNDNERAES. The segment covering 275 to 286 has biased composition (low complexity); it reads RSSYSRDSSANS. Basic and acidic residues predominate over residues 313-325; the sequence is YNPRRFTDNERGL. The Q motif motif lies at 374–402; the sequence is KTFAEIGCSEDMMKALKEQNFDRPAHIQA. The Helicase ATP-binding domain occupies 405–586; sequence FSPVIDGKSC…VEVFPDCEVV (182 aa). Residue 418–425 participates in ATP binding; sequence DQSGSGKT. The DEAD box signature appears at 533-536; that stretch reads DEVD. The Helicase C-terminal domain maps to 621–781; it reads NKKTALLQIM…DVPNAYEFTT (161 aa).

Belongs to the DEAD box helicase family.

It carries out the reaction ATP + H2O = ADP + phosphate + H(+). Functionally, probably involved in resistance to biotic and abiotic stresses. The sequence is that of DEAD-box ATP-dependent RNA helicase 50 (RH50) from Arabidopsis thaliana (Mouse-ear cress).